Consider the following 301-residue polypeptide: Ribosomal RNA small subunit methyltransferase H (301 aa).

S-adenosyl-L-methionine is bound by residues 35–37 (GGH), Asp55, Phe84, Asp105, and Gln112.

This sequence belongs to the methyltransferase superfamily. RsmH family.

The protein localises to the cytoplasm. The enzyme catalyses cytidine(1402) in 16S rRNA + S-adenosyl-L-methionine = N(4)-methylcytidine(1402) in 16S rRNA + S-adenosyl-L-homocysteine + H(+). Functionally, specifically methylates the N4 position of cytidine in position 1402 (C1402) of 16S rRNA. The chain is Ribosomal RNA small subunit methyltransferase H from Chloroflexus aurantiacus (strain ATCC 29366 / DSM 635 / J-10-fl).